We begin with the raw amino-acid sequence, 167 residues long: Small ribosomal subunit protein uS5 (167 aa).

The region spanning 19–82 (LTEKVLHINR…EAARKNMISC (64 aa)) is the S5 DRBM domain.

Belongs to the universal ribosomal protein uS5 family. Part of the 30S ribosomal subunit. Contacts proteins S4 and S8.

In terms of biological role, with S4 and S12 plays an important role in translational accuracy. Its function is as follows. Located at the back of the 30S subunit body where it stabilizes the conformation of the head with respect to the body. This Protochlamydia amoebophila (strain UWE25) protein is Small ribosomal subunit protein uS5.